Here is a 643-residue protein sequence, read N- to C-terminus: Aspartic protease 3 (643 aa).

A signal peptide spans 1–31 (MEGRTTAGRATPAGFWLFSCCLASVLWSANA). The span at 87–99 (APEVSGAAGASAS) shows a compositional bias: low complexity. Residues 87–116 (APEVSGAAGASASKTSEKPIRPYHTGPSSR) form a disordered region. One can recognise a Peptidase A1 domain in the interval 281 to 600 (YVGVIGIGTP…GTRPSLVGIA (320 aa)). Catalysis depends on residues D299 and D490.

Belongs to the peptidase A1 family.

The protein localises to the endomembrane system. With respect to regulation, inhibited by 49c, a hydroxyethylamine scaffold-based compound. Required for the processing-mediated maturation of a subset of microneme proteins, such as MIC6, and rhoptry proteins, such as ROP1. By regulating microneme and rhoptry processing, plays an essential role in the lysis of the host cell membrane during egress and in rhoptry content discharge, which is required for invasion of host cells. The chain is Aspartic protease 3 from Toxoplasma gondii.